Here is a 696-residue protein sequence, read N- to C-terminus: DNA ligase (696 aa).

NAD(+) is bound by residues 55–59 (DYEFD), 105–106 (SL), and Glu137. Lys139 functions as the N6-AMP-lysine intermediate in the catalytic mechanism. NAD(+) contacts are provided by Arg160, Glu194, Lys310, and Lys334. 4 residues coordinate Zn(2+): Cys428, Cys431, Cys446, and Cys451. Residues 615-696 (NVNPNFVGKN…EFIELKDKFD (82 aa)) enclose the BRCT domain.

This sequence belongs to the NAD-dependent DNA ligase family. LigA subfamily. It depends on Mg(2+) as a cofactor. Mn(2+) serves as cofactor.

It carries out the reaction NAD(+) + (deoxyribonucleotide)n-3'-hydroxyl + 5'-phospho-(deoxyribonucleotide)m = (deoxyribonucleotide)n+m + AMP + beta-nicotinamide D-nucleotide.. In terms of biological role, DNA ligase that catalyzes the formation of phosphodiester linkages between 5'-phosphoryl and 3'-hydroxyl groups in double-stranded DNA using NAD as a coenzyme and as the energy source for the reaction. It is essential for DNA replication and repair of damaged DNA. The protein is DNA ligase of Fusobacterium nucleatum subsp. nucleatum (strain ATCC 25586 / DSM 15643 / BCRC 10681 / CIP 101130 / JCM 8532 / KCTC 2640 / LMG 13131 / VPI 4355).